The primary structure comprises 537 residues: MLWQCWLQQAQRMRMMMKALLRFRATRLDSEMMGGWRRGAQRLAAGVVEGQRTLPQEGAAAGPRNLKEMPGPSTFRNLLEFFWRDGFSRIHEIQQNHIREYGRIFKSHFGPQFVVSIADRDMVAQILRAERDAPQRANMESWQEYRDLRGRSTGLISAEGKKWLAMRSVLRQKILRPRDVFIYAGGVNEVVSDLIKRIKTLRSREDDGETVTNVNDLYFKYSMEAVATILYECRLGCLQNEVPKQTLEYIEALELMFSMFKTTMYAGAIPKWLRPFIPKPWEEFCRSWDGLFRFSQIHVDGRLREIQACLDRGEEVKGGLLTSILISKELTLEELYANMTEMLLAGVDTTSFTLSWATYLLAKNPQAQQMVYDQIVQNLGKDTVPTAEDVPKLPLIRAVLKETLRLFPVLPGNGRVTQDDLVLGGYLIPKGTQLALCHYSTSYDQEYFTAAEDFQPGRWLRHGHLDRVENFGSIPFGYGIRSCIGKRVAELEIHLALIQLLQNFEIRTSPKTQTVLPKTHGLLCPAGAINVRFVNRE.

A heme-binding site is contributed by cysteine 483.

The protein belongs to the cytochrome P450 family. It depends on heme as a cofactor. Expressed in the dorsal third of retinal pigment epithelium, but not in the ventral counterpart (at protein level).

It localises to the membrane. It catalyses the reaction all-trans-retinol + 2 reduced [adrenodoxin] + O2 + 2 H(+) = all-trans-3,4-didehydroretinol + 2 oxidized [adrenodoxin] + 2 H2O. In terms of biological role, efficiently catalyzes the conversion of all-trans retinol (also called vitamin A1, the precursor of 11-cis retinal) to 3,4-didehydroretinol (also called vitamin A2, the precursor of 11-cis 3,4-didehydroretinal), also acts on all-trans retinal and all-trans retinoic acid. The replacement of 11-cis retinal chromophore in photopigments with 11-cis 3,4-didehydroretinal enhances sensitivity to long-wavelength light. This may improve vision in fresh water which is often turbid. The chain is Cytochrome P450 27C1 (cyp27c1) from Aquarana catesbeiana (American bullfrog).